The chain runs to 99 residues: DNA-binding protein HU (99 aa).

The segment at 67–86 (REGRNPKTGAKMKIDAYNQP) is disordered.

It belongs to the bacterial histone-like protein family. Homodimer.

In terms of biological role, histone-like DNA-binding protein which is capable of wrapping DNA to stabilize it, and thus to prevent its denaturation under extreme environmental conditions. The polypeptide is DNA-binding protein HU (hup) (Rickettsia felis (strain ATCC VR-1525 / URRWXCal2) (Rickettsia azadi)).